The following is a 250-amino-acid chain: UPF0736 protein BLi01230/BL03322 (250 aa).

The protein belongs to the UPF0736 family.

The sequence is that of UPF0736 protein BLi01230/BL03322 from Bacillus licheniformis (strain ATCC 14580 / DSM 13 / JCM 2505 / CCUG 7422 / NBRC 12200 / NCIMB 9375 / NCTC 10341 / NRRL NRS-1264 / Gibson 46).